Consider the following 96-residue polypeptide: Large ribosomal subunit protein eL30 (96 aa).

The protein belongs to the eukaryotic ribosomal protein eL30 family.

The sequence is that of Large ribosomal subunit protein eL30 from Methanosphaerula palustris (strain ATCC BAA-1556 / DSM 19958 / E1-9c).